The following is a 373-amino-acid chain: Forkhead box protein F1 (373 aa).

Positions 1-51 are disordered; the sequence is MTAEIQQPPSQPPAQSSPMSAATDKHGGQPSVMESANCATKTKKTNAGIRR. The span at 13–22 shows a compositional bias: low complexity; it reads PAQSSPMSAA. A DNA-binding region (fork-head) is located at residues 54 to 148; sequence KPPYSYIALI…EEGSFRRRPR (95 aa). Disordered regions lie at residues 236–255 and 283–306; these read GSSG…LGGG and QPLS…SLDQ. The span at 286–306 shows a compositional bias: low complexity; that stretch reads SPCNSAANPLSSSLSSHSLDQ.

The protein resides in the nucleus. Its function is as follows. Probable transcription factor. Required for smooth muscle (visceral mesoderm) differentiation during gut development. Also required for normal proliferation of the lateral plate mesoderm. Acts as a downstream mediator of bmp4-signaling. The sequence is that of Forkhead box protein F1 from Xenopus tropicalis (Western clawed frog).